Here is a 219-residue protein sequence, read N- to C-terminus: 2-hydroxy-3-keto-5-methylthiopentenyl-1-phosphate phosphatase (219 aa).

It belongs to the HAD-like hydrolase superfamily. MtnX family.

The catalysed reaction is 2-hydroxy-5-methylsulfanyl-3-oxopent-1-enyl phosphate + H2O = 1,2-dihydroxy-5-(methylsulfanyl)pent-1-en-3-one + phosphate. The protein operates within amino-acid biosynthesis; L-methionine biosynthesis via salvage pathway; L-methionine from S-methyl-5-thio-alpha-D-ribose 1-phosphate: step 4/6. In terms of biological role, dephosphorylates 2-hydroxy-3-keto-5-methylthiopentenyl-1-phosphate (HK-MTPenyl-1-P) yielding 1,2-dihydroxy-3-keto-5-methylthiopentene (DHK-MTPene). The chain is 2-hydroxy-3-keto-5-methylthiopentenyl-1-phosphate phosphatase from Bacillus anthracis (strain A0248).